The primary structure comprises 382 residues: Galactokinase (382 aa).

E34–D37 is a binding site for substrate. G124 to S130 contributes to the ATP binding site. 2 residues coordinate Mg(2+): S130 and E162. The Proton acceptor role is filled by D174. Substrate is bound at residue Y223.

This sequence belongs to the GHMP kinase family. GalK subfamily.

The protein resides in the cytoplasm. The catalysed reaction is alpha-D-galactose + ATP = alpha-D-galactose 1-phosphate + ADP + H(+). The protein operates within carbohydrate metabolism; galactose metabolism. In terms of biological role, catalyzes the transfer of the gamma-phosphate of ATP to D-galactose to form alpha-D-galactose-1-phosphate (Gal-1-P). The polypeptide is Galactokinase (Salmonella arizonae (strain ATCC BAA-731 / CDC346-86 / RSK2980)).